We begin with the raw amino-acid sequence, 606 residues long: NADH-ubiquinone oxidoreductase chain 5 (606 aa).

The next 15 helical transmembrane spans lie at 3–23 (VINL…LPIT), 38–58 (ITKM…LLFL), 87–107 (FFSL…MEFS), 124–144 (LLLF…LQLF), 180–200 (IGDM…NSWE), 216–236 (LLGL…HPWL), 244–264 (TPVS…FTLI), 276–296 (IQTS…ICAL), 304–323 (IIAL…IGIN), 328–350 (AFTH…GSII), 369–389 (MPIT…MPFL), 404–424 (MSYI…MTAS), 460–480 (LILG…PHTT), 483–503 (MTMP…GFTV), and 586–606 (LMKL…LITL).

It belongs to the complex I subunit 5 family. As to quaternary structure, core subunit of respiratory chain NADH dehydrogenase (Complex I) which is composed of 45 different subunits.

It localises to the mitochondrion inner membrane. It carries out the reaction a ubiquinone + NADH + 5 H(+)(in) = a ubiquinol + NAD(+) + 4 H(+)(out). In terms of biological role, core subunit of the mitochondrial membrane respiratory chain NADH dehydrogenase (Complex I) which catalyzes electron transfer from NADH through the respiratory chain, using ubiquinone as an electron acceptor. Essential for the catalytic activity and assembly of complex I. This is NADH-ubiquinone oxidoreductase chain 5 (MT-ND5) from Elephas maximus (Indian elephant).